We begin with the raw amino-acid sequence, 191 residues long: Small ribosomal subunit protein eS7z (191 aa).

An N-acetylmethionine modification is found at Met1. Residues 15–50 (ELSELDEQVAQAFFDLENTNQELKSELKDLYVNSAV) are a coiled coil.

This sequence belongs to the eukaryotic ribosomal protein eS7 family.

This chain is Small ribosomal subunit protein eS7z (RPS7A), found in Arabidopsis thaliana (Mouse-ear cress).